The sequence spans 151 residues: Small ribosomal subunit protein uS19 (151 aa).

This sequence belongs to the universal ribosomal protein uS19 family.

Protein S19 forms a complex with S13 that binds strongly to the 16S ribosomal RNA. The sequence is that of Small ribosomal subunit protein uS19 (rps19) from Thermoplasma acidophilum (strain ATCC 25905 / DSM 1728 / JCM 9062 / NBRC 15155 / AMRC-C165).